We begin with the raw amino-acid sequence, 96 residues long: Pro-glucagon (96 aa).

Basic and acidic residues-rich tracts occupy residues leucine 1 to alanine 12 and glutamate 19 to serine 30. A disordered region spans residues leucine 1 to serine 35.

Belongs to the glucagon family.

Its subcellular location is the secreted. Plays a key role in glucose metabolism and homeostasis. Regulates blood glucose by increasing gluconeogenesis and decreasing glycolysis. In Myoxocephalus scorpius (Shorthorn sculpin), this protein is Pro-glucagon (gcg).